The chain runs to 314 residues: Putative steroid dehydrogenase 1 (314 aa).

47 to 76 (ASWAVVTGATDGIGKSYSFELAKRGFNVYI) lines the NADP(+) pocket. Y202 is a catalytic residue.

This sequence belongs to the short-chain dehydrogenases/reductases (SDR) family. 17-beta-HSD 3 subfamily.

This Caenorhabditis elegans protein is Putative steroid dehydrogenase 1 (stdh-1).